We begin with the raw amino-acid sequence, 262 residues long: Small ribosomal subunit protein eS4 (262 aa).

The S4 RNA-binding domain occupies 42 to 105; sequence LPLVVFLRNR…NEHFRLVYDV (64 aa). The 34-residue stretch at 178-211 folds into the KOW domain; the sequence is GRLVMVTGGRNLGRVGVIVHREKHEGGFDLVHIK.

The protein belongs to the eukaryotic ribosomal protein eS4 family. As to quaternary structure, component of the small ribosomal subunit. Mature ribosomes consist of a small (40S) and a large (60S) subunit. The 40S subunit contains about 32 different proteins and 1 molecule of RNA (18S). The 60S subunit contains 45 different proteins and 3 molecules of RNA (25S, 5.8S and 5S).

It is found in the cytoplasm. Functionally, component of the ribosome, a large ribonucleoprotein complex responsible for the synthesis of proteins in the cell. The small ribosomal subunit (SSU) binds messenger RNAs (mRNAs) and translates the encoded message by selecting cognate aminoacyl-transfer RNA (tRNA) molecules. The large subunit (LSU) contains the ribosomal catalytic site termed the peptidyl transferase center (PTC), which catalyzes the formation of peptide bonds, thereby polymerizing the amino acids delivered by tRNAs into a polypeptide chain. The nascent polypeptides leave the ribosome through a tunnel in the LSU and interact with protein factors that function in enzymatic processing, targeting, and the membrane insertion of nascent chains at the exit of the ribosomal tunnel. This chain is Small ribosomal subunit protein eS4 (RPS42), found in Candida albicans (strain SC5314 / ATCC MYA-2876) (Yeast).